The primary structure comprises 202 residues: Endothelin-1 (202 aa).

The signal sequence occupies residues 1–25 (MDYFPMIFALLFVAFQGAPEAAVLG). The propeptide occupies 26-50 (TELSAGAEDGGEKPAPATPWRPRRS). 2 cysteine pairs are disulfide-bonded: cysteine 53–cysteine 67 and cysteine 55–cysteine 63. A propeptide spanning residues 74–202 (VNTPEHVVPY…DKKVIYNRAH (129 aa)) is cleaved from the precursor. Residues 110-124 (CQCASQTDKKCWNFC) form an endothelin-like region.

This sequence belongs to the endothelin/sarafotoxin family.

It localises to the secreted. Endothelins are endothelium-derived vasoconstrictor peptides. Probable ligand for G-protein coupled receptors EDNRA and EDNRB which activates PTK2B, BCAR1, BCAR3 and, GTPases RAP1 and RHOA cascade in glomerular mesangial cells. Also binds the DEAR/FBXW7-AS1 receptor. Promotes mesenteric arterial wall remodeling via activation of ROCK signaling and subsequent colocalization of NFATC3 with F-actin filaments. NFATC3 then translocates to the nucleus where it subsequently promotes the transcription of the smooth muscle hypertrophy and differentiation marker ACTA2. This chain is Endothelin-1 (EDN1), found in Bos taurus (Bovine).